Reading from the N-terminus, the 298-residue chain is MQTQRLRIAIQKKGRLSKECQDLLKRCGVKFNMMGERLVVHSENMPIDLLLVRDDDIPGLIMDGVVDLGVIGENELEEVGLERAARNEPSDYKKLRRLDFGDCRLSIAIDKDATYNGPQDLQGKRIATTYPQLVKRYMDKQGVTFSTCMLNGSVEVAPRAGLADAICDLVSTGATLEANGLKEAAVILRSKAVLIQCTAELSAEKQALIDRLLTRMQGVIQAKESKYIMLHAPTDRLEQIKMLLPGAEDPTVLPLSQNNNRVAVHLVSTENLFWETMEQLKELGASSILVLPIEKMME.

This sequence belongs to the ATP phosphoribosyltransferase family. Long subfamily. Mg(2+) is required as a cofactor.

The protein resides in the cytoplasm. The enzyme catalyses 1-(5-phospho-beta-D-ribosyl)-ATP + diphosphate = 5-phospho-alpha-D-ribose 1-diphosphate + ATP. It participates in amino-acid biosynthesis; L-histidine biosynthesis; L-histidine from 5-phospho-alpha-D-ribose 1-diphosphate: step 1/9. With respect to regulation, feedback inhibited by histidine. Functionally, catalyzes the condensation of ATP and 5-phosphoribose 1-diphosphate to form N'-(5'-phosphoribosyl)-ATP (PR-ATP). Has a crucial role in the pathway because the rate of histidine biosynthesis seems to be controlled primarily by regulation of HisG enzymatic activity. The sequence is that of ATP phosphoribosyltransferase (hisG) from Photobacterium profundum (strain SS9).